We begin with the raw amino-acid sequence, 486 residues long: NADH-quinone oxidoreductase subunit N (486 aa).

The next 13 helical transmembrane spans lie at I5–L25, L41–F61, G77–M97, S118–L138, Y165–G185, F209–F229, T245–A265, L275–I295, I304–V324, V335–M355, A380–F400, G413–L433, and V458–F478.

It belongs to the complex I subunit 2 family. In terms of assembly, NDH-1 is composed of 14 different subunits. Subunits NuoA, H, J, K, L, M, N constitute the membrane sector of the complex.

The protein localises to the cell inner membrane. The catalysed reaction is a quinone + NADH + 5 H(+)(in) = a quinol + NAD(+) + 4 H(+)(out). NDH-1 shuttles electrons from NADH, via FMN and iron-sulfur (Fe-S) centers, to quinones in the respiratory chain. The immediate electron acceptor for the enzyme in this species is believed to be ubiquinone. Couples the redox reaction to proton translocation (for every two electrons transferred, four hydrogen ions are translocated across the cytoplasmic membrane), and thus conserves the redox energy in a proton gradient. This is NADH-quinone oxidoreductase subunit N from Bdellovibrio bacteriovorus (strain ATCC 15356 / DSM 50701 / NCIMB 9529 / HD100).